The sequence spans 265 residues: Type 1 encapsulin shell protein (265 aa).

Belongs to the encapsulin family. Family 1 subfamily. In terms of assembly, found in a complex with DyP, suggesting it is the native cargo protein. Monomers form pentamers, which assemble to form hollow shells composed of 60 subunits with several openings.

It localises to the encapsulin nanocompartment. It is found in the cell membrane. Shell component of a type 1 encapsulin nanocompartment. Assembles into proteinaceous shells 23-24 nm in diameter with 2-2.5 nm thick walls. Cargo protein DyP is targeted to the interior via its C-terminal extension; probably only 1 DyP hexamer is incorporated into each shell. Probably involved in protection against oxidative damage. This chain is Type 1 encapsulin shell protein, found in Mycolicibacterium paratuberculosis (strain ATCC BAA-968 / K-10) (Mycobacterium paratuberculosis).